We begin with the raw amino-acid sequence, 418 residues long: Gene 68 protein (418 aa).

2 disordered regions span residues 230-304 and 353-418; these read IPAP…IHTL and DTFE…ERRA. The segment covering 241 to 250 has biased composition (basic and acidic residues); that stretch reads RPSEGGDARP. Residues 257–266 show a composition bias toward basic residues; it reads SRARSVHGRR. Residues 353 to 369 show a composition bias toward basic and acidic residues; it reads DTFEDNRRDELRHDDSR. A compositionally biased stretch (basic residues) spans 395-404; sequence PHLRRSRGRG.

The protein belongs to the herpesviridae US2 family.

This is Gene 68 protein from Equine herpesvirus 1 (strain Ab4p) (EHV-1).